Reading from the N-terminus, the 543-residue chain is Carboxypeptidase Y homolog A (543 aa).

The N-terminal stretch at 1–17 (MRVLPATLLVGAATAAA) is a signal peptide. Residues 18 to 124 (PPFQQILGLP…KLEAYDLRVK (107 aa)) constitute a propeptide that is removed on maturation. 5 disulfides stabilise this stretch: Cys179–Cys419, Cys313–Cys327, Cys337–Cys360, Cys344–Cys353, and Cys382–Cys389. Asn210 is a glycosylation site (N-linked (GlcNAc...) asparagine). Residue Ser266 is part of the active site. Asp458 is a catalytic residue. Residue Asn509 is glycosylated (N-linked (GlcNAc...) asparagine). Residue His520 is part of the active site.

Belongs to the peptidase S10 family.

The protein localises to the vacuole. The enzyme catalyses Release of a C-terminal amino acid with broad specificity.. Vacuolar carboxypeptidase involved in degradation of small peptides. Digests preferentially peptides containing an aliphatic or hydrophobic residue in P1' position, as well as methionine, leucine or phenylalanine in P1 position of ester substrate. This is Carboxypeptidase Y homolog A (cpyA) from Aspergillus fumigatus (strain ATCC MYA-4609 / CBS 101355 / FGSC A1100 / Af293) (Neosartorya fumigata).